Consider the following 185-residue polypeptide: UPF0301 protein Shew_1144 (185 aa).

It belongs to the UPF0301 (AlgH) family.

This Shewanella loihica (strain ATCC BAA-1088 / PV-4) protein is UPF0301 protein Shew_1144.